A 347-amino-acid chain; its full sequence is uncharacterized protein (347 aa).

The protein resides in the cytoplasm. It is found in the nucleus. This is an uncharacterized protein from Schizosaccharomyces pombe (strain 972 / ATCC 24843) (Fission yeast).